The sequence spans 334 residues: MKEKIAYLGMGIWGFCLASLLANKGYHVVGWARNAELIAQLQTEKRHPQVPDVPIHPNLSFTTDMAEAVENASMIVEGVSSAGIRPVSEQLKTITNLNVPFVITSKGIEQHTGLLLSEIVVEIFGNDASQYLGYLSGPSIAREVLKGCPCSVVISAYNPDTLKKIHNAFLTPTFRVYPNSDLKGVALGGALKNIIAIACGISDGFRFGDNAKSGLVTRGLHEIRKFATIMNCRPDTLNGLAGLGDLCTTCFSSLSRNTKFGKLIAQGMTVAQAKAEIGMVVEGVYTALSAYQIAKHHKIDMPITTGIYRVLYENLDIQEGIAALLQRNTKEEYL.

The NADPH site is built by tryptophan 13, arginine 33, and lysine 106. The sn-glycerol 3-phosphate site is built by lysine 106, glycine 137, and serine 139. Residue alanine 141 coordinates NADPH. The sn-glycerol 3-phosphate site is built by lysine 192, aspartate 245, serine 255, arginine 256, and asparagine 257. The active-site Proton acceptor is the lysine 192. Arginine 256 is a binding site for NADPH. Valine 280 and glutamate 282 together coordinate NADPH.

The protein belongs to the NAD-dependent glycerol-3-phosphate dehydrogenase family.

Its subcellular location is the cytoplasm. It carries out the reaction sn-glycerol 3-phosphate + NAD(+) = dihydroxyacetone phosphate + NADH + H(+). The enzyme catalyses sn-glycerol 3-phosphate + NADP(+) = dihydroxyacetone phosphate + NADPH + H(+). The protein operates within membrane lipid metabolism; glycerophospholipid metabolism. In terms of biological role, catalyzes the reduction of the glycolytic intermediate dihydroxyacetone phosphate (DHAP) to sn-glycerol 3-phosphate (G3P), the key precursor for phospholipid synthesis. The polypeptide is Glycerol-3-phosphate dehydrogenase [NAD(P)+] (Chlamydia caviae (strain ATCC VR-813 / DSM 19441 / 03DC25 / GPIC) (Chlamydophila caviae)).